We begin with the raw amino-acid sequence, 385 residues long: Polyketide synthase 3 (385 aa).

The active site involves Cys-157.

The protein belongs to the thiolase-like superfamily. Chalcone/stilbene synthases family. In terms of tissue distribution, expressed in male and female flowers, and seedlings.

Its subcellular location is the cytoplasm. Functionally, polyketide synthase responsible for the biosynthesis of secondary metabolites. This chain is Polyketide synthase 3 (PKSF3), found in Cannabis sativa (Hemp).